A 323-amino-acid polypeptide reads, in one-letter code: Calcium homeostasis modulator protein 2 (323 aa).

Residues 1–21 (MAALIAENFRFLSLFFKSKDV) are Cytoplasmic-facing. Residues 14-39 (LFFKSKDVMIFNGLVALGTVGSQELF) are central pore. The helical transmembrane segment at 22-43 (MIFNGLVALGTVGSQELFTVVA) threads the bilayer. At 44-52 (FHCPCSPAR) the chain is on the extracellular side. Disulfide bonds link Cys46-Cys130 and Cys48-Cys162. The chain crosses the membrane as a helical span at residues 53-76 (NYLYGLAAIGVPALALFLIGVILN). Residues 77-101 (NHTWNLVAECQYRRTKNCSAAPNFL) lie on the Cytoplasmic side of the membrane. The helical transmembrane segment at 102-132 (LLSSIVGRAAVAPVTWSVISLLRGEAYVCAL) threads the bilayer. At 133-179 (SEFVNPHSLMVGERSFPVAHATEILARFPCGEGPANLSVFREEVSRR) the chain is on the extracellular side. A hemichannel docking region spans residues 145–152 (ERSFPVAH). A helical membrane pass occupies residues 180-206 (LKYESQLFGWLLIGVVAILVFLTKCLK). Residues 207–323 (HYCSPLSYRQ…DHVEMSLLPS (117 aa)) are Cytoplasmic-facing. Residues 214-251 (YRQEAYWAQYRANEDQLFQRTAEVHSRVLAANNVRRFF) are intersubunit interaction.

The protein belongs to the CALHM family. In terms of assembly, homo-undecamer. Two undecameric hemichannels can assemble in a head-to-head manner to form a gap junction.

The protein resides in the cell membrane. The enzyme catalyses ATP(in) = ATP(out). Functionally, pore-forming subunit of Ca(2+) homeostasis modulator channels. Mediates ATP release from astrocytes and ATP-induced Ca(2+) influx in microglia thus regulating neuronal ATP and Ca(2+) homeostasis, synaptic transmission and neuroinflammatory response. May form intercellular gap junctions. The gating mechanism remains unknown. This is Calcium homeostasis modulator protein 2 (CALHM2) from Bos taurus (Bovine).